We begin with the raw amino-acid sequence, 607 residues long: V-type proton ATPase catalytic subunit A (607 aa).

Residue 246-253 (GAFGCGKT) coordinates ATP.

Belongs to the ATPase alpha/beta chains family. In terms of assembly, V-ATPase is a heteromultimeric enzyme composed of a peripheral catalytic V1 complex (components A to H) attached to an integral membrane V0 proton pore complex (components: a, c, c', c'', d, e, f and VOA1).

The protein resides in the vacuole membrane. The enzyme catalyses ATP + H2O + 4 H(+)(in) = ADP + phosphate + 5 H(+)(out). In terms of biological role, catalytic subunit of the V1 complex of vacuolar(H+)-ATPase (V-ATPase), a multisubunit enzyme composed of a peripheral complex (V1) that hydrolyzes ATP and a membrane integral complex (V0) that translocates protons. V-ATPase is responsible for acidifying and maintaining the pH of intracellular compartments. This is V-type proton ATPase catalytic subunit A (vma-1) from Neurospora crassa (strain ATCC 24698 / 74-OR23-1A / CBS 708.71 / DSM 1257 / FGSC 987).